The sequence spans 190 residues: Cytoglobin (190 aa).

The 150-residue stretch at 18–167 (ELSEAERKAV…IYSHVTAAYK (150 aa)) folds into the Globin domain. A disulfide bridge links Cys38 with Cys83. Residues His81 and His113 each coordinate heme b.

Belongs to the globin family. In terms of assembly, monomeric. Homodimer; disulfide-linked in vitro. Also homooligomeric in vitro. In terms of processing, the formation of an intramolecular disulfide bond between cysteines Cys-38 and Cys-83 specifically enhances the nitrite reductase activity. As to expression, widely expressed. Highest expression in heart, stomach, bladder and small intestine.

The protein resides in the cytoplasm. It localises to the nucleus. It carries out the reaction Fe(II)-heme b-[protein] + nitric oxide + O2 = Fe(III)-heme b-[protein] + nitrate. The enzyme catalyses Fe(III)-heme b-[protein] + nitric oxide + H2O = Fe(II)-heme b-[protein] + nitrite + 2 H(+). The catalysed reaction is 2 superoxide + 2 H(+) = H2O2 + O2. It catalyses the reaction H2O2 + AH2 = A + 2 H2O. Its activity is regulated as follows. The nitric oxide dioxygenase activity is activated by a reducing system composed of cytochrome b5, its upstream reductase CYB5R3 and NADH. Probable multifunctional globin with a hexacoordinated heme iron required for the catalysis of various reactions depending on redox condition of the cell as well as oxygen availability. Has a nitric oxide dioxygenase (NOD) activity and is most probably involved in cell-mediated and oxygen-dependent nitric oxide consumption. By scavenging this second messenger may regulate several biological processes including endothelium-mediated vasodilation and vascular tone. Under normoxic conditions functions as a nitric oxide dioxygenase (NOD) but under hypoxic conditions the globin may switch its function to that of a nitrite (NO2) reductase (NiR), generating nitric oxide. Could also have peroxidase and superoxide dismutase activities, detoxifying reactive oxygen species and protecting cells against oxidative stress. Also binds dioxygen with low affinity and could function as an oxygen sensor but has probably no function as a respiratory oxygen carrier. This Homo sapiens (Human) protein is Cytoglobin.